We begin with the raw amino-acid sequence, 929 residues long: Isoleucine--tRNA ligase (929 aa).

Residues 57-67 carry the 'HIGH' region motif; sequence PYANGNIHVGH. An L-isoleucyl-5'-AMP-binding site is contributed by Glu554. A 'KMSKS' region motif is present at residues 595–599; the sequence is KMSKS. Lys598 is a binding site for ATP. 4 residues coordinate Zn(2+): Cys888, Cys891, Cys908, and Cys911.

This sequence belongs to the class-I aminoacyl-tRNA synthetase family. IleS type 1 subfamily. In terms of assembly, monomer. Zn(2+) serves as cofactor.

Its subcellular location is the cytoplasm. It catalyses the reaction tRNA(Ile) + L-isoleucine + ATP = L-isoleucyl-tRNA(Ile) + AMP + diphosphate. In terms of biological role, catalyzes the attachment of isoleucine to tRNA(Ile). As IleRS can inadvertently accommodate and process structurally similar amino acids such as valine, to avoid such errors it has two additional distinct tRNA(Ile)-dependent editing activities. One activity is designated as 'pretransfer' editing and involves the hydrolysis of activated Val-AMP. The other activity is designated 'posttransfer' editing and involves deacylation of mischarged Val-tRNA(Ile). The polypeptide is Isoleucine--tRNA ligase (Streptococcus thermophilus (strain CNRZ 1066)).